Consider the following 470-residue polypeptide: Uronate isomerase (470 aa).

This sequence belongs to the metallo-dependent hydrolases superfamily. Uronate isomerase family.

It catalyses the reaction D-glucuronate = D-fructuronate. The enzyme catalyses aldehydo-D-galacturonate = keto-D-tagaturonate. Its pathway is carbohydrate metabolism; pentose and glucuronate interconversion. The protein is Uronate isomerase of Escherichia fergusonii (strain ATCC 35469 / DSM 13698 / CCUG 18766 / IAM 14443 / JCM 21226 / LMG 7866 / NBRC 102419 / NCTC 12128 / CDC 0568-73).